Here is a 73-residue protein sequence, read N- to C-terminus: Large ribosomal subunit protein bL31 (73 aa).

The protein belongs to the bacterial ribosomal protein bL31 family. Type A subfamily. As to quaternary structure, part of the 50S ribosomal subunit.

In terms of biological role, binds the 23S rRNA. This chain is Large ribosomal subunit protein bL31, found in Paracoccus denitrificans (strain Pd 1222).